The following is a 101-amino-acid chain: Integration host factor subunit alpha (101 aa).

Positions 49 to 70 (FGNFQLRDKPQRPGRNPKTGEE) are disordered.

The protein belongs to the bacterial histone-like protein family. In terms of assembly, heterodimer of an alpha and a beta chain.

This protein is one of the two subunits of integration host factor, a specific DNA-binding protein that functions in genetic recombination as well as in transcriptional and translational control. The chain is Integration host factor subunit alpha from Nitrosospira multiformis (strain ATCC 25196 / NCIMB 11849 / C 71).